We begin with the raw amino-acid sequence, 817 residues long: LPS-assembly protein LptD (817 aa).

An N-terminal signal peptide occupies residues 1 to 45; it reads MDRLPLPHALHVPTHRPFAAPLPPRRLLARLAALMLCGVPLAVLA.

Belongs to the LptD family. As to quaternary structure, component of the lipopolysaccharide transport and assembly complex. Interacts with LptE and LptA.

The protein localises to the cell outer membrane. Its function is as follows. Together with LptE, is involved in the assembly of lipopolysaccharide (LPS) at the surface of the outer membrane. This chain is LPS-assembly protein LptD, found in Acidovorax sp. (strain JS42).